Reading from the N-terminus, the 341-residue chain is MIILGIESSCDETSIAVVKDGKEILSNNISSQIEIHKEYGGVVPEIASRQHIKNIATVLEESLEEAKITLDDVDYIAVTYAPGLIGALLVGVSFAKGLSYAKNIPIIPVHHIKGHMYANFLEHDVELPCISLVVSGGHTNIIYIDENHNFINIGETLDDAVGESCDKVARVLGLGYPGGPVIDKMYYKGDRDFLKITKPKVSRFDFSFSGIKTAIINFDNNMKMKNQEYKKEDLAASFLGTVVDILCDKTLNAAVEKNVKTIMLAGGVAANSLLRSQLTEKAAEKGIKVIYPSMKLCTDNAAMIAEAAYYKLKNAKNEKDCFAGLDLNGVASLMVSDEKAI.

Positions 111 and 115 each coordinate Fe cation. Residues 133-137 (VVSGG), D166, G179, D183, and N271 each bind substrate. D299 is a Fe cation binding site.

The protein belongs to the KAE1 / TsaD family. Requires Fe(2+) as cofactor.

The protein resides in the cytoplasm. It carries out the reaction L-threonylcarbamoyladenylate + adenosine(37) in tRNA = N(6)-L-threonylcarbamoyladenosine(37) in tRNA + AMP + H(+). Required for the formation of a threonylcarbamoyl group on adenosine at position 37 (t(6)A37) in tRNAs that read codons beginning with adenine. Is involved in the transfer of the threonylcarbamoyl moiety of threonylcarbamoyl-AMP (TC-AMP) to the N6 group of A37, together with TsaE and TsaB. TsaD likely plays a direct catalytic role in this reaction. This Fusobacterium nucleatum subsp. nucleatum (strain ATCC 25586 / DSM 15643 / BCRC 10681 / CIP 101130 / JCM 8532 / KCTC 2640 / LMG 13131 / VPI 4355) protein is tRNA N6-adenosine threonylcarbamoyltransferase.